The following is a 470-amino-acid chain: Uronate isomerase (470 aa).

It belongs to the metallo-dependent hydrolases superfamily. Uronate isomerase family.

It catalyses the reaction D-glucuronate = D-fructuronate. It carries out the reaction aldehydo-D-galacturonate = keto-D-tagaturonate. Its pathway is carbohydrate metabolism; pentose and glucuronate interconversion. The sequence is that of Uronate isomerase from Salmonella agona (strain SL483).